Reading from the N-terminus, the 1893-residue chain is Endoribonuclease Dicer (1893 aa).

In terms of domain architecture, Helicase ATP-binding spans 41 to 217 (LLEAALDHNT…DLEEKIQKLE (177 aa)). Residue 54 to 61 (LNSGSGKT) coordinates ATP. The DECH box signature appears at 165–168 (DECH). The interval 400–424 (VSWSDSEDDDDEDEEIEEKEKTETS) is disordered. Acidic residues predominate over residues 404–416 (DSEDDDDEDEEIE). Positions 424–593 (SFPSPFTNIL…SIDCGNTESE (170 aa)) constitute a Helicase C-terminal domain. Residues 621–713 (AIGHINRYCA…MPVGKETVKY (93 aa)) enclose the Dicer dsRNA-binding fold domain. The tract at residues 718–737 (DLHDEEETSVPGRPGSTKRR) is disordered. The PAZ domain occupies 886–1036 (KFVEDIEKSE…LVPELCAIHP (151 aa)). RNase III domains are found at residues 1249 to 1380 (TSDM…ETSG) and 1637 to 1795 (FENF…MDSG). 6 residues coordinate Mg(2+): Glu-1293, Asp-1371, Glu-1374, Glu-1676, Asp-1781, and Glu-1784. A DRBM domain is found at 1820-1885 (VPRSPVRELL…ARRALRSLKA (66 aa)).

This sequence belongs to the helicase family. Dicer subfamily. As to quaternary structure, component of the RISC loading complex (RLC), or micro-RNA (miRNA) loading complex (miRLC), which is composed of dicer1, ago2 and tarbp2; dicer1 and tarbp2 are required to process precursor miRNAs (pre-miRNAs) to mature miRNAs and then load them onto ago2. Note that the trimeric RLC/miRLC is also referred to as RISC. The cofactor is Mg(2+). Requires Mn(2+) as cofactor.

It localises to the cytoplasm. The enzyme catalyses Endonucleolytic cleavage to 5'-phosphomonoester.. In terms of biological role, double-stranded RNA (dsRNA) endoribonuclease playing a central role in short dsRNA-mediated post-transcriptional gene silencing. Cleaves naturally occurring long dsRNAs and short hairpin pre-microRNAs (miRNA) into fragments of twenty-one to twenty-three nucleotides with 3' overhang of two nucleotides, producing respectively short interfering RNAs (siRNA) and mature microRNAs. SiRNAs and miRNAs serve as guide to direct the RNA-induced silencing complex (RISC) to complementary RNAs to degrade them or prevent their translation. Gene silencing mediated by siRNAs, also called RNA interference, controls the elimination of transcripts from mobile and repetitive DNA elements of the genome but also the degradation of exogenous RNA of viral origin for instance. The miRNA pathway on the other side is a mean to specifically regulate the expression of target genes. This chain is Endoribonuclease Dicer (dicer1), found in Xenopus tropicalis (Western clawed frog).